The chain runs to 229 residues: Orotidine 5'-phosphate decarboxylase (229 aa).

Substrate-binding positions include Asp12, Lys34, 61-70, Thr116, Arg177, Gln186, Gly206, and Arg207; that span reads DWKLHDIGAT. The active-site Proton donor is the Lys63.

The protein belongs to the OMP decarboxylase family. Type 1 subfamily. As to quaternary structure, homodimer.

The catalysed reaction is orotidine 5'-phosphate + H(+) = UMP + CO2. Its pathway is pyrimidine metabolism; UMP biosynthesis via de novo pathway; UMP from orotate: step 2/2. Functionally, catalyzes the decarboxylation of orotidine 5'-monophosphate (OMP) to uridine 5'-monophosphate (UMP). The sequence is that of Orotidine 5'-phosphate decarboxylase from Caulobacter sp. (strain K31).